The chain runs to 1011 residues: MLLPLFHQQPLILAKTFPDRIFPPFLVPNTLVSRRNVSRANSGIFCSSASGRKTLPQSAIQRIAEKLRSLGFVEEKHDSPTRRITGEESGKNSPGEIFVPLPKQLPIHRVGHTIDTSWSTPSYPVPKPGSGTAISRYHELKRVWKKETEMERKKEEKVPSLAELTLPPAELRRLRTVGIRLTKKLKIGKAGITEGIVNGIHERWRTTEVVKIFCEDISRMNMKRTHDVLETKTGGLVIWRSGSKILLYRGVNYQYPYFVSDRDLAHEAASGASSMDQGVVDSREKQSIAESSAPSITNKMVKPMLTQGVGSPDKVRFQLPGEVQLVEEADRLLEGLGPRFTDWWAYDPLPVDGDLLPAVVPDYRRPFRLLPYGVSPKLTDDEMTTIRRLGRPLPCHFALGRNRNLQGLAVAIVKLWEKCELAKIAVKRGVQNTNSELMAEELKWLTGGTLISRDKDFIVLYRGKDFLPSAVSSAIEERRRQTMIMENSSVHGNKLTENEEEIKPRAVKEDIELEAKDQKDHIQTHQMKSRQRNSPEAILEKTSMKLSMALEKKANAEKVLADLENRESPQLSDIDKEGITNDEKYMLRKIGLKMKPFLLLGRRGVFDGTIENMHLHWKYRELVKIICNEYSIEAAHKVAEILEAESGGILVAVEMVSKGYAIIVYRGKNYERPQCLRPQTLLSKREALKRSVEAQRRKSLKLHVLKLSNNIEELNRQLVEDSATNETWSDGESSNMMVEEETENQHTEPEKAREKIELGYSSDLSVPSSGEENWEDDSEGEVDPLTTSSQEYQEDESESASSQRHEGNSLDSTANLSVFAETGSANASSFHDRSLPHNSFLNANRKLPGSSTGSGSQISALRERKSENDGLVTDLSNRERLILRKQALKMKKRPPFAVGRSNVVTGLARTLKMHFQKNPLAIVNVKGRANGTSVQEVIAKLKEETGALLVSQEPSKVILYRGWGAEEEMKSFYPNNNVKSSINLPSTRSFVDDPPHVSPALIEAIRLECGL.

Residues 1-45 (MLLPLFHQQPLILAKTFPDRIFPPFLVPNTLVSRRNVSRANSGIF) constitute a chloroplast transit peptide. A compositionally biased stretch (basic and acidic residues) spans 77-90 (HDSPTRRITGEESG). The interval 77–96 (HDSPTRRITGEESGKNSPGE) is disordered. 3 CRM domains span residues 164–260 (LTLP…YFVS), 376–473 (PKLT…AVSS), and 577–677 (EGIT…QCLR). Disordered regions lie at residues 721–810 (DSAT…GNSL) and 841–872 (LNANRKLPGSSTGSGSQISALRERKSENDGLV). A compositionally biased stretch (polar residues) spans 722 to 736 (SATNETWSDGESSNM). The span at 743–757 (ENQHTEPEKAREKIE) shows a compositional bias: basic and acidic residues. The segment covering 762 to 771 (SDLSVPSSGE) has biased composition (polar residues). The span at 772–782 (ENWEDDSEGEV) shows a compositional bias: acidic residues. The segment covering 849–859 (GSSTGSGSQIS) has biased composition (polar residues). A CRM 4 domain is found at 873-972 (TDLSNRERLI…WGAEEEMKSF (100 aa)).

As to quaternary structure, interacts with RNA. Part of large ribonucleo-protein particles that contain CAF1 and/or CAF2.

The protein resides in the plastid. It is found in the chloroplast stroma. In terms of biological role, binds specific group II introns in chloroplasts and facilitates their splicing. Acts on both subgroup IIA and subgroup IIB introns. The substrates of the subgroup IIB also require the CRM domain proteins CAF1 or CAF2, with a simultaneous binding of CFM2 and CAF1 or CAF2. Can bind to and promote the splicing of the single group I intron in chloroplast tRNA transcript of trnL-UAA gene. In Arabidopsis thaliana (Mouse-ear cress), this protein is CRM-domain containing factor CFM2, chloroplastic.